An 88-amino-acid polypeptide reads, in one-letter code: uncharacterized protein (88 aa).

A disordered region spans residues 1-31; the sequence is MIPRDPRSPAPDLSAINQPAGRAERRSGPAT.

This is an uncharacterized protein from Escherichia coli.